The sequence spans 156 residues: Ribosome maturation factor RimP (156 aa).

The protein belongs to the RimP family.

It is found in the cytoplasm. Functionally, required for maturation of 30S ribosomal subunits. The protein is Ribosome maturation factor RimP of Dictyoglomus thermophilum (strain ATCC 35947 / DSM 3960 / H-6-12).